A 312-amino-acid chain; its full sequence is DNA-directed RNA polymerase subunit alpha (312 aa).

Residues 1–226 form an alpha N-terminal domain (alpha-NTD) region; that stretch reads MIEFEKPKIT…DHLNLFVDLS (226 aa). The segment at 243–312 is alpha C-terminal domain (alpha-CTD); it reads TERVLDKIIE…ELGLSLKKRK (70 aa).

This sequence belongs to the RNA polymerase alpha chain family. As to quaternary structure, homodimer. The RNAP catalytic core consists of 2 alpha, 1 beta, 1 beta' and 1 omega subunit. When a sigma factor is associated with the core the holoenzyme is formed, which can initiate transcription.

It carries out the reaction RNA(n) + a ribonucleoside 5'-triphosphate = RNA(n+1) + diphosphate. DNA-dependent RNA polymerase catalyzes the transcription of DNA into RNA using the four ribonucleoside triphosphates as substrates. The protein is DNA-directed RNA polymerase subunit alpha of Lactococcus lactis subsp. lactis (strain IL1403) (Streptococcus lactis).